A 238-amino-acid chain; its full sequence is Sugar fermentation stimulation protein homolog (238 aa).

This sequence belongs to the SfsA family.

The chain is Sugar fermentation stimulation protein homolog from Haemophilus influenzae (strain PittGG).